We begin with the raw amino-acid sequence, 228 residues long: tRNA (guanine-N(1)-)-methyltransferase (228 aa).

Residues Gly111 and 135-140 (LGDYVL) contribute to the S-adenosyl-L-methionine site.

The protein belongs to the RNA methyltransferase TrmD family. Homodimer.

The protein localises to the cytoplasm. It catalyses the reaction guanosine(37) in tRNA + S-adenosyl-L-methionine = N(1)-methylguanosine(37) in tRNA + S-adenosyl-L-homocysteine + H(+). Functionally, specifically methylates guanosine-37 in various tRNAs. The protein is tRNA (guanine-N(1)-)-methyltransferase of Clavibacter sepedonicus (Clavibacter michiganensis subsp. sepedonicus).